The primary structure comprises 207 residues: Phosphoserine phosphatase (207 aa).

Asp8 (nucleophile) is an active-site residue. Residues Asp8 and Asp10 each contribute to the Mg(2+) site. Asp10 functions as the Proton donor in the catalytic mechanism. Substrate-binding positions include Glu17, Arg53, 96-97 (SG), and Lys141. Asp164 is a Mg(2+) binding site. Asn167 is a substrate binding site.

It belongs to the HAD-like hydrolase superfamily. SerB family. Mg(2+) is required as a cofactor.

The enzyme catalyses O-phospho-L-serine + H2O = L-serine + phosphate. It carries out the reaction O-phospho-D-serine + H2O = D-serine + phosphate. The protein operates within amino-acid biosynthesis; L-serine biosynthesis; L-serine from 3-phospho-D-glycerate: step 3/3. The chain is Phosphoserine phosphatase from Campylobacter jejuni subsp. doylei (strain ATCC BAA-1458 / RM4099 / 269.97).